We begin with the raw amino-acid sequence, 548 residues long: Cilia- and flagella-associated protein 97 (548 aa).

2 positions are modified to phosphoserine: serine 8 and serine 19. Disordered stretches follow at residues 85–297, 407–431, and 497–548; these read NYLT…RQEN, LSRQAEKPGNKSTIPGRSLGHPPKL, and YSPL…LRSH. The segment covering 91–107 has biased composition (basic and acidic residues); that stretch reads GNERKPKFPSKEQHVEN. The segment covering 112-121 has biased composition (low complexity); sequence TRSPSLLTSS. The span at 152–161 shows a compositional bias: acidic residues; sequence DYYTDGEESS. A Phosphothreonine modification is found at threonine 155. Residues serine 160 and serine 161 each carry the phosphoserine modification. Residues 191-209 show a composition bias toward low complexity; sequence KASSSSLSSSSSRSSSDCS. The segment covering 214 to 237 has biased composition (polar residues); the sequence is DMQNKPDSGSSGKRVSSVTPSSPK. At serine 235 the chain carries Phosphoserine. Residues 238 to 248 show a composition bias toward basic residues; that stretch reads QKCKSGRKSSA. The residue at position 259 (serine 259) is a Phosphoserine. A compositionally biased stretch (polar residues) spans 264–289; sequence TDVTPASTPDSSPAQPFELSQSQNQK. Residues 383 to 460 are a coiled coil; that stretch reads RKNYSFTREE…ALLKRLEAVK (78 aa). Composition is skewed to polar residues over residues 504 to 514 and 537 to 548; these read SRTSSATSGLS and IQCSNSKVLRSH.

This sequence belongs to the CFAP97 family.

In Rattus norvegicus (Rat), this protein is Cilia- and flagella-associated protein 97.